The sequence spans 229 residues: Potassium/proton antiporter CemA (229 aa).

4 helical membrane-spanning segments follow: residues 6–26 (AFIP…ISLC), 107–127 (IFNF…SFWG), 152–172 (FLIL…GWEL), and 190–210 (LSGL…YWIF).

Belongs to the CemA family.

The protein resides in the plastid. The protein localises to the chloroplast inner membrane. It catalyses the reaction K(+)(in) + H(+)(out) = K(+)(out) + H(+)(in). Functionally, contributes to K(+)/H(+) antiport activity by supporting proton efflux to control proton extrusion and homeostasis in chloroplasts in a light-dependent manner to modulate photosynthesis. Prevents excessive induction of non-photochemical quenching (NPQ) under continuous-light conditions. Indirectly promotes efficient inorganic carbon uptake into chloroplasts. In Aethionema cordifolium (Lebanon stonecress), this protein is Potassium/proton antiporter CemA.